A 300-amino-acid chain; its full sequence is Phospholipase A1 (300 aa).

Cys4 and Cys87 are oxidised to a cystine. Ser137 serves as the catalytic Nucleophile. The Charge relay system role is filled by Asp165. 2 disulfides stabilise this stretch: Cys176–Cys181 and Cys219–Cys227. His229 acts as the Charge relay system in catalysis. 3 cysteine pairs are disulfide-bonded: Cys244/Cys268, Cys245/Cys293, and Cys261/Cys266.

It belongs to the AB hydrolase superfamily. Lipase family. Expressed by the venom gland.

The protein resides in the secreted. It carries out the reaction a 1,2-diacyl-sn-glycero-3-phosphocholine + H2O = a 2-acyl-sn-glycero-3-phosphocholine + a fatty acid + H(+). Its function is as follows. Catalyzes the hydrolysis of phosphatidylcholine with phospholipase A1 activity. May act as an allergen and induce hemolytic activity. This is Phospholipase A1 from Vespula maculifrons (Eastern yellow jacket).